We begin with the raw amino-acid sequence, 582 residues long: uncharacterized protein (582 aa).

The next 6 membrane-spanning stretches (helical) occupy residues 17–37 (VAMLMMLQLVSTLASLYLPTV), 57–77 (LGAVMLGVTGLQVLCAIGAVY), 131–151 (MTATVLVTAPIMCVGGIIMAI), 156–176 (ALTWLLLVSVPILAVANYWII), 239–259 (ALMLPVTTLTINASSVALIWF), and 271–291 (VGSLIAFLSYFAQILMAVLMA). The ABC transmembrane type-1 domain maps to 17 to 300 (VAMLMMLQLV…ATMTLAVLPR (284 aa)). The 237-residue stretch at 335–571 (VRLAGATFTY…CPTYAEFAAS (237 aa)) folds into the ABC transporter domain. 369-376 (GSTGSGKS) is a binding site for ATP.

The protein belongs to the ABC transporter superfamily. MsbA family.

The protein localises to the cell membrane. This is an uncharacterized protein from Mycobacterium bovis (strain ATCC BAA-935 / AF2122/97).